The sequence spans 554 residues: Zinc finger protein 426 (554 aa).

The 71-residue stretch at 42–112 (VTFDDVAVDF…QGGVLQGWEM (71 aa)) folds into the KRAB domain. The C2H2-type 1; atypical zinc finger occupies 146–174 (CDCEQCGEVFSEHSCLKTHVRTQSTGNTH). 11 consecutive C2H2-type zinc fingers follow at residues 224 to 246 (FECS…MRTH), 280 to 302 (YKCK…MRTH), 308 to 330 (YECK…GRTH), 336 to 358 (YVCK…VRSH), 364 to 386 (YECK…IRTH), 392 to 414 (FVCV…LRTH), 420 to 442 (CECK…MRTH), 448 to 470 (YTCK…MRIH), 476 to 498 (YECK…ERTH), 504 to 526 (YECK…EKTH), and 532 to 554 (YKCQ…EQIH).

Its subcellular location is the nucleus. Its function is as follows. May be involved in transcriptional regulation. This chain is Zinc finger protein 426 (ZNF426), found in Homo sapiens (Human).